Here is a 290-residue protein sequence, read N- to C-terminus: HTH-type transcriptional regulator BudR (290 aa).

An HTH lysR-type domain is found at 1 to 58; that stretch reads MELRYLRYFVAVAEARNFTRAAHDLGISQPPLSQQIQRLEREIGTPLLRRLTRGVELT. Positions 18 to 37 form a DNA-binding region, H-T-H motif; it reads FTRAAHDLGISQPPLSQQIQ.

The protein belongs to the LysR transcriptional regulatory family.

Its function is as follows. Regulator of the budABC operon for 2,3-butanediol synthesis. The sequence is that of HTH-type transcriptional regulator BudR (budR) from Raoultella terrigena (Klebsiella terrigena).